A 99-amino-acid chain; its full sequence is Nucleoid-associated protein SPN23F10240 (99 aa).

This sequence belongs to the YbaB/EbfC family. In terms of assembly, homodimer.

Its subcellular location is the cytoplasm. It localises to the nucleoid. In terms of biological role, binds to DNA and alters its conformation. May be involved in regulation of gene expression, nucleoid organization and DNA protection. The sequence is that of Nucleoid-associated protein SPN23F10240 from Streptococcus pneumoniae (strain ATCC 700669 / Spain 23F-1).